We begin with the raw amino-acid sequence, 360 residues long: NADH-quinone oxidoreductase subunit H (360 aa).

The next 8 helical transmembrane spans lie at 20-40 (GMVWPVLWILLKIVALLIPLM), 95-115 (GLFVLGPVMAIMPALAAWVVI), 130-150 (LLLVMAITSIEVYGVIIAGWA), 176-196 (FCLLIVIMVSGSMNLTEIVLA), 206-226 (GIGFLSWNWLPLLPVFLVYLI), 261-281 (IFFLAEYASMWLVSILAALMF), 297-317 (IPGWIWLGIKTCLVVSMFIWI), and 336-356 (IFIPVTLACLLIAGGWLLSPW).

This sequence belongs to the complex I subunit 1 family. In terms of assembly, NDH-1 is composed of 14 different subunits. Subunits NuoA, H, J, K, L, M, N constitute the membrane sector of the complex.

The protein localises to the cell inner membrane. It carries out the reaction a quinone + NADH + 5 H(+)(in) = a quinol + NAD(+) + 4 H(+)(out). Functionally, NDH-1 shuttles electrons from NADH, via FMN and iron-sulfur (Fe-S) centers, to quinones in the respiratory chain. The immediate electron acceptor for the enzyme in this species is believed to be ubiquinone. Couples the redox reaction to proton translocation (for every two electrons transferred, four hydrogen ions are translocated across the cytoplasmic membrane), and thus conserves the redox energy in a proton gradient. This subunit may bind ubiquinone. The polypeptide is NADH-quinone oxidoreductase subunit H (Verminephrobacter eiseniae (strain EF01-2)).